A 123-amino-acid chain; its full sequence is Large ribosomal subunit protein uL14 (123 aa).

This sequence belongs to the universal ribosomal protein uL14 family. In terms of assembly, part of the 50S ribosomal subunit. Forms a cluster with proteins L3 and L19. In the 70S ribosome, L14 and L19 interact and together make contacts with the 16S rRNA in bridges B5 and B8.

Functionally, binds to 23S rRNA. Forms part of two intersubunit bridges in the 70S ribosome. The sequence is that of Large ribosomal subunit protein uL14 from Corynebacterium jeikeium (strain K411).